The following is a 215-amino-acid chain: 3-demethoxyubiquinol 3-hydroxylase (215 aa).

Fe cation-binding residues include glutamate 64, glutamate 94, histidine 97, glutamate 146, glutamate 178, and histidine 181.

This sequence belongs to the COQ7 family. Fe cation serves as cofactor.

It localises to the cell membrane. It catalyses the reaction a 5-methoxy-2-methyl-3-(all-trans-polyprenyl)benzene-1,4-diol + AH2 + O2 = a 3-demethylubiquinol + A + H2O. Its pathway is cofactor biosynthesis; ubiquinone biosynthesis. In terms of biological role, catalyzes the hydroxylation of 2-nonaprenyl-3-methyl-6-methoxy-1,4-benzoquinol during ubiquinone biosynthesis. This is 3-demethoxyubiquinol 3-hydroxylase from Pseudomonas fluorescens (strain ATCC BAA-477 / NRRL B-23932 / Pf-5).